A 569-amino-acid polypeptide reads, in one-letter code: uncharacterized protein (569 aa).

The signal sequence occupies residues 1-24; it reads MKFQRKYWGLLSTLGVSSAVALSA. Cysteine 25 carries the N-palmitoyl cysteine lipid modification. Cysteine 25 is lipidated: S-diacylglycerol cysteine. Disordered regions lie at residues 111–137 and 242–267; these read SNMK…EWEV and GKNG…KKIE. Low complexity-rich tracts occupy residues 119 to 130 and 249 to 260; these read SSSSSSTGNNGS and KKMTTDSSSTQQ.

To M.pneumoniae MPN_456 and M.genitalium MG321 N-terminal region.

Its subcellular location is the cell membrane. This is an uncharacterized protein from Mycoplasma pneumoniae (strain ATCC 29342 / M129 / Subtype 1) (Mycoplasmoides pneumoniae).